The sequence spans 85 residues: U4-theraphotoxin-Hhn1a (85 aa).

The signal sequence occupies residues 1 to 22 (MKVTLIAILTCAAVLVLHTTAA). The propeptide occupies 23 to 48 (EELEAESQPMEVGMPDTELAAVDEER). Intrachain disulfides connect cysteine 52-cysteine 66, cysteine 56-cysteine 77, and cysteine 71-cysteine 82.

This sequence belongs to the neurotoxin 12 (Hwtx-2) family. 02 (Hwtx-2) subfamily. As to quaternary structure, monomer. In terms of tissue distribution, expressed by the venom gland.

It is found in the secreted. Its function is as follows. Neurotoxin active on both insects and mammals. This is U4-theraphotoxin-Hhn1a from Cyriopagopus hainanus (Chinese bird spider).